The chain runs to 910 residues: p53-induced death domain-containing protein 1 (910 aa).

Residues 1–25 (MAATVEGPELEAAAAAGDASEDSDA) form a disordered region. Ala-2 bears the N-acetylalanine mark. LRR repeat units lie at residues 126–147 (HLAH…VLQM), 149–171 (GLGA…GALP), 172–194 (ALTF…GALS), 195–216 (TLQR…IGGL), 218–240 (SLLE…AGLR), 241–263 (SLRL…ARLP), and 264–285 (LLTR…LLDA). A phosphoserine mark is found at Ser-299 and Ser-305. ZU5 domains follow at residues 322-454 (DLDS…VSRP) and 455-596 (VSNA…WYTT). Peptidase S68 regions lie at residues 423–452 (DLET…LVVS) and 566–594 (DITA…WLWY). Residues His-444, Ser-446, His-586, and Ser-588 contribute to the active site. The UPA domain stretch occupies residues 580-716 (ARFQVTHFSW…TTTLDREAQA (137 aa)). Residues 788 to 873 (TQSNLLSVAG…DVAEEVRAVL (86 aa)) enclose the Death domain. The disordered stretch occupies residues 884-910 (IRRMGLAPKDPALPGSSAPQPPEPAQA).

In terms of assembly, forms a complex named the PIDDosome with CASP2 and CRADD. Forms a complex with IKBKG and RIPK1. Interacts with FADD and MADD. Post-translationally, undergoes autoproteolytic processing whose extent either directs cells towards survival or apoptotic pathways. Autoproteolytically cleaved into two main fragments PIDD-N and PIDD-C. PIDD-C can be further processed into PIDD-CC, a processing which is enhanced by DNA damage. The cleavage producing PIDD-C is required for translocation of PIDD1 to the nucleus upon DNA damage and activation of NF-kappa-B. PIDD-CC mediates the interaction with CRADD and the cleavage producing PIDD-CC is required for the activation of CASP2. PIDD-N remains associated with PIDD-C and PIDD-CC after cleavage. In terms of tissue distribution, ubiquitous.

It localises to the cytoplasm. The protein localises to the nucleus. Functionally, component of the DNA damage/stress response pathway that functions downstream of p53/TP53 and can either promote cell survival or apoptosis. Associated with CRADD and the CASP2 caspase, it forms the PIDDosome a complex that activates CASP2 and triggers apoptosis. Associated with IKBKG and RIPK1, it enhances sumoylation and ubiquitination of IKBKG which is important for activation of the transcription factor NF-kappa-B. This is p53-induced death domain-containing protein 1 from Homo sapiens (Human).